The sequence spans 459 residues: Putrescine aminotransferase (459 aa).

Pyridoxal 5'-phosphate-binding positions include 150–151 (GT) and Gln-274. Lys-300 is modified (N6-(pyridoxal phosphate)lysine). Residue Thr-332 participates in pyridoxal 5'-phosphate binding.

The protein belongs to the class-III pyridoxal-phosphate-dependent aminotransferase family. Putrescine aminotransferase subfamily. Pyridoxal 5'-phosphate is required as a cofactor.

It catalyses the reaction an alkane-alpha,omega-diamine + 2-oxoglutarate = an omega-aminoaldehyde + L-glutamate. It carries out the reaction putrescine + 2-oxoglutarate = 1-pyrroline + L-glutamate + H2O. The catalysed reaction is cadaverine + 2-oxoglutarate = 5-aminopentanal + L-glutamate. The protein operates within amine and polyamine degradation; putrescine degradation; 4-aminobutanal from putrescine (transaminase route): step 1/1. Its function is as follows. Catalyzes the aminotransferase reaction from putrescine to 2-oxoglutarate, leading to glutamate and 4-aminobutanal, which spontaneously cyclizes to form 1-pyrroline. This is the first step in one of two pathways for putrescine degradation, where putrescine is converted into 4-aminobutanoate (gamma-aminobutyrate or GABA) via 4-aminobutanal. Also functions as a cadaverine transaminase in a a L-lysine degradation pathway to succinate that proceeds via cadaverine, glutarate and L-2-hydroxyglutarate. This chain is Putrescine aminotransferase, found in Salmonella dublin (strain CT_02021853).